A 215-amino-acid polypeptide reads, in one-letter code: Adenylate kinase (215 aa).

An ATP-binding site is contributed by 10–15 (GAGKGT). The NMP stretch occupies residues 30-59 (STGDILRANVREGTELGLAAKAYMDKGELV). AMP contacts are provided by residues T31, R36, 57–59 (ELV), 85–88 (GYPR), and Q92. An LID region spans residues 126-162 (GRLMCKCGASYHIISNPPKKDNVCDICGGEVFQRADD). R127 serves as a coordination point for ATP. Zn(2+)-binding residues include C130 and C132. 135 to 136 (SY) is a binding site for ATP. Zn(2+)-binding residues include C149 and C152. The AMP site is built by R159 and R170. K198 provides a ligand contact to ATP.

This sequence belongs to the adenylate kinase family. In terms of assembly, monomer.

The protein localises to the cytoplasm. The catalysed reaction is AMP + ATP = 2 ADP. The protein operates within purine metabolism; AMP biosynthesis via salvage pathway; AMP from ADP: step 1/1. In terms of biological role, catalyzes the reversible transfer of the terminal phosphate group between ATP and AMP. Plays an important role in cellular energy homeostasis and in adenine nucleotide metabolism. The protein is Adenylate kinase of Methanosarcina acetivorans (strain ATCC 35395 / DSM 2834 / JCM 12185 / C2A).